The sequence spans 23 residues: Septenin 2a (23 aa).

In terms of tissue distribution, expressed in skin glands.

It is found in the secreted. Functionally, may act as an antimicrobial peptide. This Osteopilus septentrionalis (Cuban treefrog) protein is Septenin 2a.